The sequence spans 272 residues: uncharacterized protein (272 aa).

Belongs to the sodium:galactoside symporter (TC 2.A.2) family.

This is an uncharacterized protein from Pseudescherichia vulneris (Escherichia vulneris).